Consider the following 135-residue polypeptide: uncharacterized protein (135 aa).

The region spanning 8 to 123 (PQGTIVLKTL…IFIYVAIDET (116 aa)) is the HotDog ACOT-type domain.

Belongs to the acyl coenzyme A hydrolase family.

This is an uncharacterized protein from Buchnera aphidicola subsp. Schizaphis graminum (strain Sg).